Consider the following 550-residue polypeptide: Chaperonin GroEL (550 aa).

ATP contacts are provided by residues Thr-30 to Pro-33, Lys-51, Asp-87 to Thr-91, Gly-415, Asn-479 to Ala-481, and Asp-495.

It belongs to the chaperonin (HSP60) family. In terms of assembly, forms a cylinder of 14 subunits composed of two heptameric rings stacked back-to-back. Interacts with the co-chaperonin GroES.

It is found in the cytoplasm. It carries out the reaction ATP + H2O + a folded polypeptide = ADP + phosphate + an unfolded polypeptide.. Together with its co-chaperonin GroES, plays an essential role in assisting protein folding. The GroEL-GroES system forms a nano-cage that allows encapsulation of the non-native substrate proteins and provides a physical environment optimized to promote and accelerate protein folding. In Polaromonas sp. (strain JS666 / ATCC BAA-500), this protein is Chaperonin GroEL.